Reading from the N-terminus, the 334-residue chain is L-lactate dehydrogenase B chain (334 aa).

The residue at position 2 (Ala2) is an N-acetylalanine. An N6-acetyllysine modification is found at Lys7. NAD(+)-binding positions include Gly30–Lys58 and Arg100. Phosphoserine is present on Ser44. Lys58 is subject to N6-acetyllysine. Residue Arg107 participates in substrate binding. Lys119 carries the N6-acetyllysine modification. NAD(+) is bound at residue Asn139. Substrate is bound by residues Asn139 and Arg170. The Proton acceptor role is filled by His194. Phosphotyrosine is present on Tyr240. Thr249 provides a ligand contact to substrate. Residue Lys329 is modified to N6-acetyllysine.

Belongs to the LDH/MDH superfamily. LDH family. Homotetramer. Interacts with PTEN upstream reading frame protein MP31; the interaction leads to inhibition of mitochondrial lactate dehydrogenase activity, preventing conversion of lactate to pyruvate in mitochondria.

The protein resides in the cytoplasm. The protein localises to the mitochondrion inner membrane. It carries out the reaction (S)-lactate + NAD(+) = pyruvate + NADH + H(+). It participates in fermentation; pyruvate fermentation to lactate; (S)-lactate from pyruvate: step 1/1. Its function is as follows. Interconverts simultaneously and stereospecifically pyruvate and lactate with concomitant interconversion of NADH and NAD(+). The sequence is that of L-lactate dehydrogenase B chain (LDHB) from Sus scrofa (Pig).